Consider the following 489-residue polypeptide: MAIDLRPFIPFGRGALSQATDPFRAAVEFTLMPMLITNPHLPDNPIVFANPAFLKLTGYEADEVMGRNCRFLQGHGTDPAHVCAIKSAIAAEKPIDIDIINYKKSGEAFWNRLHISPVHNANGRLQHFVSSQLDVTLELSRLVELEKERKTLSIETARSKDQLDYIVEVANIGFWTREFYSGKMTCSAECRRIYGFTPDEPVHFDTILDLVVLEDRMTVVQKAHQAVTGEPYSIEYRIVTRLGETRWLETRAKALTGENPLVLGIVQDVTERKKAEANKALVSREIAHRFKNSMAMVQSIANQTLRNTYDPEQANRLFSERLRALSQAHDMLLKENWAGATIQQICATALAPFNSTFANRIHMSGPHLLVSDRVTVALSLAFYELATNAVKYGALSNEKGVINITWAIMEDKGEKKFHMRWAESRGPEVMQPARRGFGQRLLHSVLAEELKAKCDVEFAASGLLIDVLAPITPEVFPGMGHNVPEQRIA.

Residues 19–93 (ATDPFRAAVE…AIKSAIAAEK (75 aa)) form the PAS domain. Cys69 is subject to S-4a-FMN cysteine. 2 consecutive PAC domains span residues 93–147 (KPID…ELEK) and 232–281 (YSIE…NKAL). An HWE histidine kinase domain region spans residues 259 to 341 (NPLVLGIVQD…LLKENWAGAT (83 aa)). Position 288 is a phosphohistidine; by autocatalysis (His288).

Post-translationally, FMN binds covalently to cysteine after exposure to blue light and this bond is spontaneously broken in the dark.

It carries out the reaction ATP + protein L-histidine = ADP + protein N-phospho-L-histidine.. In terms of biological role, photosensitive kinase that is involved in increased bacterial virulence upon exposure to light. Once ejected from an infected animal host, sunlight acts as an environmental signal that increases the virulence of the bacterium, preparing it for infection of the next host. This photoreceptor protein is directly related to the bacterium's survival and replication within host macrophages. The sequence is that of Blue-light-activated histidine kinase from Brucella ovis (strain ATCC 25840 / 63/290 / NCTC 10512).